The following is a 371-amino-acid chain: Dual-specificity RNA methyltransferase RlmN (371 aa).

Glu-114 acts as the Proton acceptor in catalysis. The 233-residue stretch at 120 to 352 (EEDHFTLCVS…VMTRQSKGAD (233 aa)) folds into the Radical SAM core domain. A disulfide bond links Cys-127 and Cys-357. Residues Cys-134, Cys-138, and Cys-141 each contribute to the [4Fe-4S] cluster site. Residues 183-184 (GE), Ser-216, 238-240 (SLN), and Asn-314 contribute to the S-adenosyl-L-methionine site. Residue Cys-357 is the S-methylcysteine intermediate of the active site.

Belongs to the radical SAM superfamily. RlmN family. The cofactor is [4Fe-4S] cluster.

The protein resides in the cytoplasm. The catalysed reaction is adenosine(2503) in 23S rRNA + 2 reduced [2Fe-2S]-[ferredoxin] + 2 S-adenosyl-L-methionine = 2-methyladenosine(2503) in 23S rRNA + 5'-deoxyadenosine + L-methionine + 2 oxidized [2Fe-2S]-[ferredoxin] + S-adenosyl-L-homocysteine. It catalyses the reaction adenosine(37) in tRNA + 2 reduced [2Fe-2S]-[ferredoxin] + 2 S-adenosyl-L-methionine = 2-methyladenosine(37) in tRNA + 5'-deoxyadenosine + L-methionine + 2 oxidized [2Fe-2S]-[ferredoxin] + S-adenosyl-L-homocysteine. Its function is as follows. Specifically methylates position 2 of adenine 2503 in 23S rRNA and position 2 of adenine 37 in tRNAs. m2A2503 modification seems to play a crucial role in the proofreading step occurring at the peptidyl transferase center and thus would serve to optimize ribosomal fidelity. The sequence is that of Dual-specificity RNA methyltransferase RlmN from Desulfosudis oleivorans (strain DSM 6200 / JCM 39069 / Hxd3) (Desulfococcus oleovorans).